A 452-amino-acid polypeptide reads, in one-letter code: Eukaryotic translation initiation factor 3 subunit E (452 aa).

A compositionally biased stretch (polar residues) spans 1-17; sequence MADNTPTTANDLLNDAT. The segment at 1–23 is disordered; that stretch reads MADNTPTTANDLLNDATQAAAKS. The PCI domain maps to 246-426; the sequence is PFFNHEPARD…GTVVMNHPPS (181 aa).

It belongs to the eIF-3 subunit E family. As to quaternary structure, component of the eukaryotic translation initiation factor 3 (eIF-3) complex.

The protein resides in the cytoplasm. In terms of biological role, component of the eukaryotic translation initiation factor 3 (eIF-3) complex, which is involved in protein synthesis of a specialized repertoire of mRNAs and, together with other initiation factors, stimulates binding of mRNA and methionyl-tRNAi to the 40S ribosome. The eIF-3 complex specifically targets and initiates translation of a subset of mRNAs involved in cell proliferation. The polypeptide is Eukaryotic translation initiation factor 3 subunit E (int6) (Botryotinia fuckeliana (strain B05.10) (Noble rot fungus)).